Here is a 445-residue protein sequence, read N- to C-terminus: POU domain, class 3, transcription factor 2 (445 aa).

Disordered stretches follow at residues 64–173 and 203–269; these read ALSH…WRSA and LGAG…TPTS. A compositionally biased stretch (gly residues) spans 67–90; sequence HGGGGGGGGGGGGGGGGGGGGGDG. Composition is skewed to low complexity over residues 125 to 151 and 163 to 173; these read QQQH…QQQQ and HHPGPGAWRSA. Residues 217–226 are compositionally biased toward basic and acidic residues; the sequence is LRDAHDEPHH. Residues 227 to 237 are compositionally biased toward basic residues; the sequence is ADHHPHPHSHP. The span at 239–253 shows a compositional bias: pro residues; it reads QQPPPPPPPQGPPGH. The region spanning 264–338 is the POU-specific domain; the sequence is EDTPTSDDLE…LLNKWLEEAD (75 aa). Position 343 is a phosphoserine (S343). The segment at residues 356–415 is a DNA-binding region (homeobox); the sequence is KRKKRTSIEVSVKGALESHFLKCPKPSAQEITSLADSLQLEKEVVRVWFCNRRQKEKRMT. Residues 411–445 form a disordered region; it reads EKRMTPPGGTLPGAEDVYGGSRDTPPHHGVQTPVQ.

Belongs to the POU transcription factor family. Class-3 subfamily. Interacts with PQBP1. Interaction with ISL1. In terms of tissue distribution, expressed specifically in the neuroectodermal cell lineage.

Its subcellular location is the nucleus. Transcription factor that plays a key role in neuronal differentiation. Binds preferentially to the recognition sequence which consists of two distinct half-sites, ('GCAT') and ('TAAT'), separated by a non-conserved spacer region of 0, 2, or 3 nucleotides. Acts as a transcriptional activator when binding cooperatively with SOX4, SOX11, or SOX12 to gene promoters. The combination of three transcription factors, ASCL1, POU3F2/BRN2 and MYT1L, is sufficient to reprogram fibroblasts and other somatic cells into induced neuronal (iN) cells in vitro. Acts downstream of ASCL1, accessing chromatin that has been opened by ASCL1, and promotes transcription of neuronal genes. The sequence is that of POU domain, class 3, transcription factor 2 (Pou3f2) from Mus musculus (Mouse).